The following is a 113-amino-acid chain: Prefoldin subunit beta (113 aa).

The protein belongs to the prefoldin subunit beta family. Heterohexamer of two alpha and four beta subunits.

The protein resides in the cytoplasm. Functionally, molecular chaperone capable of stabilizing a range of proteins. Seems to fulfill an ATP-independent, HSP70-like function in archaeal de novo protein folding. The chain is Prefoldin subunit beta from Methanococcus maripaludis (strain C6 / ATCC BAA-1332).